Reading from the N-terminus, the 205-residue chain is Probable GTP-binding protein EngB (205 aa).

The 175-residue stretch at N25–K199 folds into the EngB-type G domain. GTP is bound by residues G33–S40, G60–L64, D78–G81, T145–D148, and F178–S180. Mg(2+) contacts are provided by S40 and T62.

The protein belongs to the TRAFAC class TrmE-Era-EngA-EngB-Septin-like GTPase superfamily. EngB GTPase family. Mg(2+) is required as a cofactor.

In terms of biological role, necessary for normal cell division and for the maintenance of normal septation. The chain is Probable GTP-binding protein EngB from Buchnera aphidicola subsp. Acyrthosiphon pisum (strain 5A).